The primary structure comprises 929 residues: Protein translocase subunit SecA (929 aa).

Residues Gln83, 101 to 105, and Asp491 each bind ATP; that span reads GEGKT.

It belongs to the SecA family. Monomer and homodimer. Part of the essential Sec protein translocation apparatus which comprises SecA, SecYEG and auxiliary proteins SecDF. Other proteins may also be involved.

The protein resides in the cell inner membrane. It localises to the cellular thylakoid membrane. It is found in the cytoplasm. It carries out the reaction ATP + H2O + cellular proteinSide 1 = ADP + phosphate + cellular proteinSide 2.. In terms of biological role, part of the Sec protein translocase complex. Interacts with the SecYEG preprotein conducting channel. Has a central role in coupling the hydrolysis of ATP to the transfer of proteins into and across the cell membrane, serving as an ATP-driven molecular motor driving the stepwise translocation of polypeptide chains across the membrane. Its function is as follows. Probably participates in protein translocation into and across both the cytoplasmic and thylakoid membranes in cyanobacterial cells. In Thermosynechococcus vestitus (strain NIES-2133 / IAM M-273 / BP-1), this protein is Protein translocase subunit SecA.